The sequence spans 380 residues: MRNCKMARVASVLGLVMLSVALLILSLISYVSLKKENIFTTPKYASPGAPRMYMFHAGFRSQFALKFLDPSFVPITNSLTQELQEKPSKWKFNRTAFLHQRQEILQHVDVIKNFSLTKNSVRIGQLMHYDYSSHKYVFSISNNFRSLLPDVSPIMNKHYNICAVVGNSGILTGSQCGQEIDKSDFVFRCNFAPTEAFQRDVGRKTNLTTFNPSILEKYYNNLLTIQDRNNFFLSLKKLDGAILWIPAFFFHTSATVTRTLVDFFVEHRGQLKVQLAWPGNIMQHVNRYWKNKHLSPKRLSTGILMYTLASAICEEIHLYGFWPFGFDPNTREDLPYHYYDKKGTKFTTKWQESHQLPAEFQLLYRMHGEGLTKLTLSHCA.

At 1-9 (MRNCKMARV) the chain is on the cytoplasmic side. Residues 10–33 (ASVLGLVMLSVALLILSLISYVSL) traverse the membrane as a helical; Signal-anchor for type II membrane protein segment. Residues 34 to 380 (KKENIFTTPK…LTKLTLSHCA (347 aa)) are Lumenal-facing. 3 N-linked (GlcNAc...) asparagine glycosylation sites follow: Asn-93, Asn-113, and Asn-160. Cystine bridges form between Cys-162–Cys-313 and Cys-176–Cys-379. 2 residues coordinate CMP-N-acetyl-beta-neuraminate: Asn-167 and Asn-190. Asn-206 carries N-linked (GlcNAc...) asparagine glycosylation. 6 residues coordinate CMP-N-acetyl-beta-neuraminate: Ser-300, Thr-301, Gly-302, Trp-322, Tyr-336, and His-337. His-354 serves as the catalytic Proton donor/acceptor.

The protein belongs to the glycosyltransferase 29 family. Homodimer. Post-translationally, autopolysialylated. In terms of tissue distribution, expressed in fetal and adult brain and fetal liver.

The protein resides in the golgi apparatus membrane. The catalysed reaction is [N-acetyl-alpha-D-neuraminosyl-(2-&gt;8)](n) + CMP-N-acetyl-beta-neuraminate = [N-acetyl-alpha-D-neuraminosyl-(2-&gt;8)](n+1) + CMP + H(+). It carries out the reaction alpha-Neu5Ac-(2-&gt;3)-beta-D-Gal-(1-&gt;4)-6S-D-GlcNAc + CMP-N-acetyl-beta-neuraminate = alpha-Neu5Ac-(2-&gt;8)-alpha-Neu5Ac-(2-&gt;3)-beta-D-Gal-(1-&gt;4)-6S-D-GlcNAc + CMP + H(+). It catalyses the reaction a ganglioside GM3 (d18:1(4E)) + CMP-N-acetyl-beta-neuraminate = a ganglioside GD3 (d18:1(4E)) + CMP + H(+). The enzyme catalyses a ganglioside GM3 + CMP-N-acetyl-beta-neuraminate = a ganglioside GD3 + CMP + H(+). The catalysed reaction is an N-acetyl-alpha-neuraminyl-(2-&gt;3)-beta-D-galactosyl derivative + CMP-N-acetyl-beta-neuraminate = an N-acetyl-alpha-neuraminyl-(2-&gt;8)-N-acetyl-alpha-neuraminyl-(2-&gt;3)-beta-D-galactosyl derivative + CMP + H(+). It carries out the reaction an N-acetyl-alpha-neuraminyl-(2-&gt;3)-beta-D-galactosyl-(1-&gt;4)-N-acetyl-beta-D-glucosaminyl derivative + CMP-N-acetyl-beta-neuraminate = an alpha-Neu5Ac-(2-&gt;8)-alpha-Neu5Ac-(2-&gt;3)-beta-D-Gal-(1-&gt;4)-beta-D-GlcNAc derivative + CMP + H(+). Its pathway is protein modification; protein glycosylation. Its function is as follows. Catalyzes the transfer of sialic acid from a CMP-linked sialic acid donor onto a terminal alpha-2,3-, alpha-2,6-, or alpha-2,8-linked sialic acid of an acceptor, such as N-linked oligosaccharides of glycoproteins and glycolipids through alpha-2,8-linkages. Forms oligosialic and polysialic acid on various sialylated N-acetyllactosamine oligosaccharides of glycoproteins, including FETUB N-glycans, a2-HS-glycoprotein (AHSG) and alpha 2,3-sialylated glycosphingolipids, such as alpha 2,3-sialylparagloboside and ganglioside GM3 and to a lesser extent NCAM1 N-glycans. However, it is much more specific to N-linked oligosaccharides of glycoproteins than glycosphingolipids. 2,3-sialylparagloboside serves as the best acceptor substrate among the glycolipids. alpha-Neu5Ac-(2-&gt;8)-alpha-Neu5Ac-(2-&gt;3)-beta-D-Gal-(1-&gt;4)-6S-D-GlcNAc and monosialyl and disialyl N-acetyllactosamines are the best acceptor substrates among glycoproteins. May plays critical role in the striatum by mediating the formation of disialylated and trisialylated terminal glycotopes on N- and O-glycans of specific striatal proteins, regulating their distribution in lipid rafts, affecting their interaction with other binding partners, and subsequently modulating striatal functions. This Homo sapiens (Human) protein is Alpha-N-acetylneuraminate alpha-2,8-sialyltransferase ST8SIA3.